A 101-amino-acid polypeptide reads, in one-letter code: Integration host factor subunit beta (101 aa).

The protein belongs to the bacterial histone-like protein family. Heterodimer of an alpha and a beta chain.

Functionally, this protein is one of the two subunits of integration host factor, a specific DNA-binding protein that functions in genetic recombination as well as in transcriptional and translational control. This Rhodopseudomonas palustris (strain BisB5) protein is Integration host factor subunit beta.